The chain runs to 183 residues: Peptide deformylase (183 aa).

Residues cysteine 110 and histidine 153 each contribute to the Fe cation site. Glutamate 154 is a catalytic residue. Histidine 157 contributes to the Fe cation binding site.

Belongs to the polypeptide deformylase family. The cofactor is Fe(2+).

The enzyme catalyses N-terminal N-formyl-L-methionyl-[peptide] + H2O = N-terminal L-methionyl-[peptide] + formate. Functionally, removes the formyl group from the N-terminal Met of newly synthesized proteins. Requires at least a dipeptide for an efficient rate of reaction. N-terminal L-methionine is a prerequisite for activity but the enzyme has broad specificity at other positions. This chain is Peptide deformylase, found in Listeria monocytogenes serotype 4b (strain CLIP80459).